A 241-amino-acid polypeptide reads, in one-letter code: Carboxy-S-adenosyl-L-methionine synthase (241 aa).

Residues Y38, 63–65, 88–89, 116–117, N131, and R198 each bind S-adenosyl-L-methionine; these read GCS, DN, and DI.

This sequence belongs to the class I-like SAM-binding methyltransferase superfamily. Cx-SAM synthase family. As to quaternary structure, homodimer.

The enzyme catalyses prephenate + S-adenosyl-L-methionine = carboxy-S-adenosyl-L-methionine + 3-phenylpyruvate + H2O. In terms of biological role, catalyzes the conversion of S-adenosyl-L-methionine (SAM) to carboxy-S-adenosyl-L-methionine (Cx-SAM). This is Carboxy-S-adenosyl-L-methionine synthase from Haemophilus influenzae (strain PittGG).